Here is a 156-residue protein sequence, read N- to C-terminus: Small ribosomal subunit protein uS7 (156 aa).

It belongs to the universal ribosomal protein uS7 family. Part of the 30S ribosomal subunit. Contacts proteins S9 and S11.

Functionally, one of the primary rRNA binding proteins, it binds directly to 16S rRNA where it nucleates assembly of the head domain of the 30S subunit. Is located at the subunit interface close to the decoding center, probably blocks exit of the E-site tRNA. The polypeptide is Small ribosomal subunit protein uS7 (Streptomyces griseus subsp. griseus (strain JCM 4626 / CBS 651.72 / NBRC 13350 / KCC S-0626 / ISP 5235)).